Consider the following 314-residue polypeptide: 2-desacetyl-2-hydroxyethyl bacteriochlorophyllide A dehydrogenase (314 aa).

The protein operates within porphyrin-containing compound metabolism; bacteriochlorophyll biosynthesis (light-independent). This protein catalyzes the penultimate step in bacteriochlorophyll a biosynthesis. This chain is 2-desacetyl-2-hydroxyethyl bacteriochlorophyllide A dehydrogenase (bchC), found in Rhodobacter capsulatus (strain ATCC BAA-309 / NBRC 16581 / SB1003).